The sequence spans 114 residues: Hydrogenase maturation factor HypA (114 aa).

His2 provides a ligand contact to Ni(2+). 4 residues coordinate Zn(2+): Cys73, Cys76, Cys89, and Cys92.

It belongs to the HypA/HybF family.

In terms of biological role, involved in the maturation of [NiFe] hydrogenases. Required for nickel insertion into the metal center of the hydrogenase. This Psychromonas ingrahamii (strain DSM 17664 / CCUG 51855 / 37) protein is Hydrogenase maturation factor HypA.